Consider the following 98-residue polypeptide: MSGDDLDERIETYYVRVRGVVQGVGFRHATVREAHALKLRGWVANLDDGSVEAMLQGPAPQIDRMLAWLRHGPSTAHVTEVTFEERPTDKRFERFQQH.

An Acylphosphatase-like domain is found at T12–H98. Residues R27 and N45 contribute to the active site.

The protein belongs to the acylphosphatase family.

The enzyme catalyses an acyl phosphate + H2O = a carboxylate + phosphate + H(+). This Burkholderia thailandensis (strain ATCC 700388 / DSM 13276 / CCUG 48851 / CIP 106301 / E264) protein is Acylphosphatase (acyP).